Reading from the N-terminus, the 985-residue chain is Guanine nucleotide exchange protein smcr8b (985 aa).

Residues 47–225 (ISSAKLKKDF…VKCSSEREPI (179 aa)) enclose the uDENN FLCN/SMCR8-type domain. A compositionally biased stretch (basic and acidic residues) spans 242 to 292 (NEKSSHTDEISPQEKDGCGNSRKVEVKLENENRSHFEHEQYGKQRKDKPDK). Disordered stretches follow at residues 242–301 (NEKS…PLAN), 502–528 (QSQV…SPAE), and 639–659 (EESP…EDNN). Positions 390-895 (RLKTLEELCD…LINLLVEPKS (506 aa)) constitute a cDENN FLCN/SMCR8-type domain. A compositionally biased stretch (polar residues) spans 502 to 514 (QSQVQHSTLNTPS). The dDENN FLCN/SMCR8-type domain occupies 904–962 (FTFAQSVQSKLVTKAFLLTFSHGHPSPSRPQGSSGTECFLSELHTDDKKILRYLSELIK).

The protein belongs to the SMCR8 family. In terms of assembly, component of the C9orf72-SMCR8 complex. The C9orf72-SMCR8 complex associates with the ATG1/ULK1 kinase complex.

The protein localises to the cytoplasm. The protein resides in the nucleus. In terms of biological role, component of the C9orf72-SMCR8 complex, a complex that has guanine nucleotide exchange factor (GEF) activity and regulates autophagy. In the complex, C9orf72 and SMCR8 probably constitute the catalytic subunits that promote the exchange of GDP to GTP, converting inactive GDP-bound RAB8A and RAB39B into their active GTP-bound form, thereby promoting autophagosome maturation. The C9orf72-SMCR8 complex also acts as a negative regulator of autophagy initiation by interacting with the ATG1/ULK1 kinase complex and inhibiting its protein kinase activity. The sequence is that of Guanine nucleotide exchange protein smcr8b (smcr8b) from Danio rerio (Zebrafish).